The primary structure comprises 488 residues: Histone deacetylase 2 (488 aa).

Residues 9–322 (KKKVCYYYDG…WTYETAVALD (314 aa)) form a histone deacetylase region. 1D-myo-inositol 1,4,5,6-tetrakisphosphate is bound by residues glycine 28 and lysine 32. Lysine 75 is subject to N6-acetyllysine; alternate. Residue lysine 75 forms a Glycyl lysine isopeptide (Lys-Gly) (interchain with G-Cter in SUMO2); alternate linkage. Histidine 142 is an active-site residue. 8 residues coordinate Ca(2+): aspartate 175, aspartate 177, histidine 179, phenylalanine 188, threonine 191, valine 194, serine 198, and phenylalanine 199. 2 residues coordinate Zn(2+): aspartate 177 and histidine 179. The residue at position 221 (lysine 221) is an N6-acetyllysine. A Ca(2+)-binding site is contributed by tyrosine 223. Cysteine 262 carries the S-nitrosocysteine modification. Aspartate 265 is a binding site for Zn(2+). Residue arginine 271 coordinates 1D-myo-inositol 1,4,5,6-tetrakisphosphate. S-nitrosocysteine is present on cysteine 274. The segment at 389–488 (AVHEDSGDED…GTKSEQLSNP (100 aa)) is disordered. Residues serine 394, serine 407, serine 422, and serine 424 each carry the phosphoserine modification. Residues 402 to 417 (PDKRISIRASDKRIAC) show a composition bias toward basic and acidic residues. Positions 418–428 (DEEFSDSEDEG) are enriched in acidic residues. A compositionally biased stretch (basic and acidic residues) spans 429-481 (EGGRRNVADHKKGAKKARIEEDKKETEDKKTDVKEEDKSKDNSGEKTDTKGTK). Residues lysine 439, lysine 452, lysine 458, lysine 462, lysine 478, and lysine 481 each participate in a glycyl lysine isopeptide (Lys-Gly) (interchain with G-Cter in SUMO2) cross-link.

This sequence belongs to the histone deacetylase family. HD type 1 subfamily. As to quaternary structure, part of the core histone deacetylase (HDAC) complex composed of HDAC1, HDAC2, RBBP4 and RBBP7, the core complex associates with SIN3, SAP18 and SAP30 to form the SIN3 HDAC complex. Component of the nucleosome remodeling and deacetylase (NuRD) repressor complex, composed of core proteins MTA1, MTA2, MTA3, RBBP4, RBBP7, HDAC1, HDAC2, MBD2, MBD3, and peripherally associated proteins CDK2AP1, CDK2AP2, GATAD2A, GATAD2B, CHD3, CHD4 and CHD5. The exact stoichiometry of the NuRD complex is unknown, and some subunits such as MBD2 and MBD3, GATAD2A and GATAD2B, and CHD3, CHD4 and CHD5 define mutually exclusive NuRD complexes. Component of a RCOR/GFI/KDM1A/HDAC complex. Component of a BHC histone deacetylase complex that contains HDAC1, HDAC2, HMG20B, KDM1A, RCOR1 and PHF21A. The BHC complex may also contain ZMYM2, ZNF217, ZMYM3, GSE1 and GTF2I. Part of a complex containing the core histones H2A, H2B, H3 and H4, DEK and unphosphorylated DAXX. Part of a complex containing ATR and CHD4. Forms a heterologous complex at least with YY1. Interacts in the late S-phase of DNA-replication with DNMT1 in the other transcriptional repressor complex composed of DNMT1, DMAP1, PCNA, CAF1. Component of a mSin3A corepressor complex that contains SIN3A, SAP130, SUDS3, ARID4B, HDAC1 and HDAC2. Part of a complex composed of TRIM28, HDAC1, HDAC2 and EHMT2. Part of a complex containing at least CDYL, MIER1, MIER2, HDAC1 and HDAC2. Component of a histone deacetylase complex containing DNTTIP1, ZNF541, HDAC1 and HDAC2. Forms a complex comprising APPL1, RUVBL2, APPL2, CTNNB1 and HDAC1. Interacts directly with GFI1. Interacts directly with GFI1B. Interacts with APEX1; the interaction is not dependent on the acetylated status of APEX1. Interacts with ATR. Interacts with BCL6 (non-acetylated form). Interacts with BEND3. Interacts with CBFA2T3. Interacts with CDK2AP1. Interacts with CHD4. Interacts with CHD5. Interacts with CHFR. Interacts with CRY1. Interacts with DNMT1. Interacts with GATAD2A. Interacts with HCFC1. Interacts with HDAC7. Interacts with HDAC10. Interacts with INSM1. Interacts with KDM4A. Interacts with MACROH2A1 (via the non-histone region). Interacts with MBD3L2. Interacts with MTA1, with a preference for sumoylated MTA1. Interacts with NACC2. Interacts with NRIP1. Interacts with PELP1. Interacts with PIMREG. Interacts with PRDM6. Interacts with PWWP2B. Interacts with SAP30. Interacts with SAP30L. Interacts with SETDB1. Interacts with SIX3. Interacts with SMARCAD1. Interacts with SNW1. Interacts with SPHK2. Interacts with SPEN/MINT. Interacts (CK2 phosphorylated form) with SP3. Interacts with SUV39H1. Interacts with TSHZ3 (via its N-terminus). Interacts with ZMYND8. Interacts with ZNF431. Interacts with ZNF263; recruited to the SIX3 promoter along with other proteins involved in chromatin modification and transcriptional corepression where it contributes to transcriptional repression. Identified in a complex with HDAC1, KCTD19, DNTTIP1 and ZNF541. Component of the SIN3B complex, which includes SIN3B, HDAC2, PHF12 and MORF4L1; interacts directly with all subunits. Zn(2+) is required as a cofactor. The cofactor is Ca(2+). Post-translationally, S-nitrosylated by GAPDH. In neurons, S-nitrosylation at Cys-262 and Cys-274 does not affect enzyme activity, but induces HDAC2 release from chromatin. This in turn increases acetylation of histones surrounding neurotrophin-dependent gene promoters and promotes their transcription. In embryonic cortical neurons, S-Nitrosylation regulates dendritic growth and branching. Widely expressed; lower levels in brain and lung.

It localises to the nucleus. The protein localises to the cytoplasm. It catalyses the reaction N(6)-acetyl-L-lysyl-[histone] + H2O = L-lysyl-[histone] + acetate. The enzyme catalyses N(6)-acetyl-L-lysyl-[protein] + H2O = L-lysyl-[protein] + acetate. The catalysed reaction is N(6)-(2E)-butenoyl-L-lysyl-[protein] + H2O = (2E)-2-butenoate + L-lysyl-[protein]. It carries out the reaction N(6)-(2-hydroxyisobutanoyl)-L-lysyl-[protein] + H2O = 2-hydroxy-2-methylpropanoate + L-lysyl-[protein]. It catalyses the reaction N(6)-[(S)-lactoyl]-L-lysyl-[protein] + H2O = (S)-lactate + L-lysyl-[protein]. Inositol tetraphosphate (1D-myo-inositol 1,4,5,6-tetrakisphosphate) may act as an intermolecular glue between HDAC2 and N-Cor repressor complex components. In terms of biological role, histone deacetylase that catalyzes the deacetylation of lysine residues on the N-terminal part of the core histones (H2A, H2B, H3 and H4). Histone deacetylation gives a tag for epigenetic repression and plays an important role in transcriptional regulation, cell cycle progression and developmental events. Histone deacetylases act via the formation of large multiprotein complexes. Forms transcriptional repressor complexes by associating with MAD, SIN3, YY1 and N-COR. Component of a RCOR/GFI/KDM1A/HDAC complex that suppresses, via histone deacetylase (HDAC) recruitment, a number of genes implicated in multilineage blood cell development. Acts as a component of the histone deacetylase NuRD complex which participates in the remodeling of chromatin. Component of the SIN3B complex that represses transcription and counteracts the histone acetyltransferase activity of EP300 through the recognition H3K27ac marks by PHF12 and the activity of the histone deacetylase HDAC2. Also deacetylates non-histone targets: deacetylates TSHZ3, thereby regulating its transcriptional repressor activity. May be involved in the transcriptional repression of circadian target genes, such as PER1, mediated by CRY1 through histone deacetylation. Involved in MTA1-mediated transcriptional corepression of TFF1 and CDKN1A. In addition to protein deacetylase activity, also acts as a protein-lysine deacylase by recognizing other acyl groups: catalyzes removal of (2E)-butenoyl (crotonyl), lactoyl (lactyl) and 2-hydroxyisobutanoyl (2-hydroxyisobutyryl) acyl groups from lysine residues, leading to protein decrotonylation, delactylation and de-2-hydroxyisobutyrylation, respectively. This chain is Histone deacetylase 2, found in Homo sapiens (Human).